The primary structure comprises 209 residues: Molybdenum cofactor guanylyltransferase (209 aa).

GTP-binding positions include Leu16–Gly18, Lys28, Asn56, Asp69, and Asp103. Residue Asp103 coordinates Mg(2+).

The protein belongs to the MobA family. Monomer. Requires Mg(2+) as cofactor.

It is found in the cytoplasm. It carries out the reaction Mo-molybdopterin + GTP + H(+) = Mo-molybdopterin guanine dinucleotide + diphosphate. Transfers a GMP moiety from GTP to Mo-molybdopterin (Mo-MPT) cofactor (Moco or molybdenum cofactor) to form Mo-molybdopterin guanine dinucleotide (Mo-MGD) cofactor. The protein is Molybdenum cofactor guanylyltransferase of Rhizobium johnstonii (strain DSM 114642 / LMG 32736 / 3841) (Rhizobium leguminosarum bv. viciae).